A 272-amino-acid polypeptide reads, in one-letter code: Glutamate 5-kinase (272 aa).

Lys-15 contributes to the ATP binding site. Substrate is bound by residues Ser-55, Asp-142, and Asn-158. Residues 178 to 179 and 220 to 226 each bind ATP; these read SD and TGGMLSK.

Belongs to the glutamate 5-kinase family.

The protein resides in the cytoplasm. It carries out the reaction L-glutamate + ATP = L-glutamyl 5-phosphate + ADP. Its pathway is amino-acid biosynthesis; L-proline biosynthesis; L-glutamate 5-semialdehyde from L-glutamate: step 1/2. Its function is as follows. Catalyzes the transfer of a phosphate group to glutamate to form L-glutamate 5-phosphate. The chain is Glutamate 5-kinase from Streptococcus equi subsp. zooepidemicus (strain H70).